A 312-amino-acid polypeptide reads, in one-letter code: Olfactory receptor 2J2 (312 aa).

At 1 to 26 (MMIKKNASSEDFFILLGFSNWPQLEV) the chain is on the extracellular side. N6 carries N-linked (GlcNAc...) asparagine glycosylation. A helical transmembrane segment spans residues 27–50 (VLFVVILIFYLMTLTGNLFIIILS). Residues 51 to 58 (YVDSHLHT) lie on the Cytoplasmic side of the membrane. Residues 59–80 (PMYFFLSNLSFLDLCHTTSSIP) traverse the membrane as a helical segment. The Extracellular segment spans residues 81-101 (QLLVNLRGPEKTISYAGCMVQ). Cysteines 98 and 190 form a disulfide. A helical membrane pass occupies residues 102–121 (LYFVLALGIAECVLLVVMSY). Residues 122 to 140 (DRYVAVCRPLHYTVLMHPR) lie on the Cytoplasmic side of the membrane. A helical transmembrane segment spans residues 141–159 (FCHLLAAASWVIGFTISAL). Residues 160-196 (HSSFTFWVPLCGHRLVDHFFCEVPALLRLSCVDTHAN) are Extracellular-facing. The chain crosses the membrane as a helical span at residues 197-220 (ELTLMVMSSIFVLIPLILILTAYG). The Cytoplasmic segment spans residues 221–237 (AIARAVLSMQSTTGLQK). The chain crosses the membrane as a helical span at residues 238 to 260 (VFRTCGAHLMVVSLFFIPVMCMY). Residues 261 to 273 (LQPPSENSPDQGK) lie on the Extracellular side of the membrane. A helical transmembrane segment spans residues 274–293 (FIALFYTVVTPSLNPLIYTL). At 294–312 (RNKHVKGAAKRLLGWEWGK) the chain is on the cytoplasmic side.

The protein belongs to the G-protein coupled receptor 1 family.

The protein resides in the cell membrane. Functionally, odorant receptor. This chain is Olfactory receptor 2J2 (OR2J2), found in Homo sapiens (Human).